Consider the following 158-residue polypeptide: Lipoprotein signal peptidase (158 aa).

The next 3 membrane-spanning stretches (helical) occupy residues 4–24, 63–83, and 88–108; these read KYYITISLIVAIAILIIDQVT, KMGFFYIITIVILIVLVLFYI, and YNLFMQVAISLLFAGALGNFI. Residues aspartate 118 and aspartate 136 contribute to the active site. The helical transmembrane segment at 131–151 threads the bilayer; that stretch reads IFNVADSSLTIGVLFIIIALL.

The protein belongs to the peptidase A8 family.

The protein localises to the cell membrane. It catalyses the reaction Release of signal peptides from bacterial membrane prolipoproteins. Hydrolyzes -Xaa-Yaa-Zaa-|-(S,diacylglyceryl)Cys-, in which Xaa is hydrophobic (preferably Leu), and Yaa (Ala or Ser) and Zaa (Gly or Ala) have small, neutral side chains.. Its pathway is protein modification; lipoprotein biosynthesis (signal peptide cleavage). This protein specifically catalyzes the removal of signal peptides from prolipoproteins. The sequence is that of Lipoprotein signal peptidase from Staphylococcus haemolyticus (strain JCSC1435).